Consider the following 338-residue polypeptide: Glyceraldehyde-3-phosphate dehydrogenase (338 aa).

NAD(+) is bound by residues 13–14, Asp-35, and Arg-80; that span reads RI. D-glyceraldehyde 3-phosphate is bound by residues 151 to 153, Thr-182, 211 to 212, and Arg-234; these read SCT and TG. Cys-152 serves as the catalytic Nucleophile. Asn-316 provides a ligand contact to NAD(+).

This sequence belongs to the glyceraldehyde-3-phosphate dehydrogenase family. In terms of assembly, homotetramer.

It is found in the cytoplasm. The enzyme catalyses D-glyceraldehyde 3-phosphate + phosphate + NAD(+) = (2R)-3-phospho-glyceroyl phosphate + NADH + H(+). The protein operates within carbohydrate degradation; glycolysis; pyruvate from D-glyceraldehyde 3-phosphate: step 1/5. This is Glyceraldehyde-3-phosphate dehydrogenase (GPD) from Sclerotinia sclerotiorum (White mold).